The sequence spans 71 residues: Disintegrin ussuristatin-2 (71 aa).

A Disintegrin domain is found at 1–71 (EAGEECDCGA…QSADCPRNGF (71 aa)). 6 disulfides stabilise this stretch: C6/C21, C8/C16, C15/C38, C29/C35, C34/C59, and C47/C66. Residues 51–53 (KGD) carry the Cell attachment site; atypical (KGD) motif.

This sequence belongs to the venom metalloproteinase (M12B) family. P-II subfamily. P-IId sub-subfamily. Homodimer. As to expression, expressed by the venom gland.

It localises to the secreted. Suppress platelet aggregation induced by ADP, collagen, thrombin, and epinephrine (IC(50)=170-330 nM). Also dose-dependently inhibits the adhesion of human melanoma cells to fibrinogen but not to fibronectin. The protein is Disintegrin ussuristatin-2 of Gloydius ussuriensis (Ussuri mamushi).